A 364-amino-acid polypeptide reads, in one-letter code: Ribosomal RNA large subunit methyltransferase M (364 aa).

Residues S187, 220-223, D239, D259, and D276 contribute to the S-adenosyl-L-methionine site; that span reads CPGG. The active-site Proton acceptor is K305.

Belongs to the class I-like SAM-binding methyltransferase superfamily. RNA methyltransferase RlmE family. RlmM subfamily. Monomer.

Its subcellular location is the cytoplasm. It catalyses the reaction cytidine(2498) in 23S rRNA + S-adenosyl-L-methionine = 2'-O-methylcytidine(2498) in 23S rRNA + S-adenosyl-L-homocysteine + H(+). Catalyzes the 2'-O-methylation at nucleotide C2498 in 23S rRNA. This is Ribosomal RNA large subunit methyltransferase M from Aeromonas hydrophila subsp. hydrophila (strain ATCC 7966 / DSM 30187 / BCRC 13018 / CCUG 14551 / JCM 1027 / KCTC 2358 / NCIMB 9240 / NCTC 8049).